Consider the following 270-residue polypeptide: Glutamate racemase (270 aa).

Residues Asp14–Ser15 and Tyr46–Gly47 contribute to the substrate site. Cys77 serves as the catalytic Proton donor/acceptor. Residue Asn78–Thr79 participates in substrate binding. Cys189 serves as the catalytic Proton donor/acceptor. Thr190–His191 is a binding site for substrate.

The protein belongs to the aspartate/glutamate racemases family.

It catalyses the reaction L-glutamate = D-glutamate. It functions in the pathway cell wall biogenesis; peptidoglycan biosynthesis. Its function is as follows. Provides the (R)-glutamate required for cell wall biosynthesis. In Neisseria meningitidis serogroup A / serotype 4A (strain DSM 15465 / Z2491), this protein is Glutamate racemase.